Reading from the N-terminus, the 534-residue chain is Protoheme IX farnesyltransferase (534 aa).

Residues 1–251 form a unknown region; sequence MRREHARAIL…VLLEGKPSLL (251 aa). Transmembrane regions (helical) follow at residues 17–37, 39–59, 83–103, 128–148, 163–183, 197–217, 261–281, 284–304, 339–359, 360–380, 384–404, 411–431, 457–477, 479–499, and 508–528; these read PWLL…GGIV, ALTG…ALAI, YLTL…FGAI, LALA…ALAV, VAWA…QVLL, LMHL…TTLA, GVIS…PAGI, LSLV…SHSI, IALG…LAAI, LALA…KRTS, IVIG…AVTG, LLLW…LALI, IVIY…LGML, WAYL…ALKL, and AWAL…AMAV. A protoheme IX prenyltransferase region spans residues 252–530; sequence KDYISLTKPG…ILFVAMAVDR (279 aa).

It in the C-terminal section; belongs to the UbiA prenyltransferase family. Protoheme IX farnesyltransferase subfamily.

It is found in the cell membrane. It carries out the reaction heme b + (2E,6E)-farnesyl diphosphate + H2O = Fe(II)-heme o + diphosphate. It functions in the pathway porphyrin-containing compound metabolism; heme O biosynthesis; heme O from protoheme: step 1/1. Its function is as follows. Converts heme B (protoheme IX) to heme O by substitution of the vinyl group on carbon 2 of heme B porphyrin ring with a hydroxyethyl farnesyl side group. The chain is Protoheme IX farnesyltransferase (ctaB) from Roseiflexus sp. (strain RS-1).